We begin with the raw amino-acid sequence, 326 residues long: Diaminopimelate epimerase (326 aa).

Residues Asn-13 and Asn-72 each coordinate substrate. The active-site Proton donor is Cys-81. Substrate-binding positions include 82–83, Asn-169, Asn-205, and 223–224; these read GN and ER. Cys-232 (proton acceptor) is an active-site residue. 233–234 is a substrate binding site; it reads GT.

This sequence belongs to the diaminopimelate epimerase family. As to quaternary structure, homodimer.

The protein resides in the cytoplasm. It catalyses the reaction (2S,6S)-2,6-diaminopimelate = meso-2,6-diaminopimelate. The protein operates within amino-acid biosynthesis; L-lysine biosynthesis via DAP pathway; DL-2,6-diaminopimelate from LL-2,6-diaminopimelate: step 1/1. Catalyzes the stereoinversion of LL-2,6-diaminopimelate (L,L-DAP) to meso-diaminopimelate (meso-DAP), a precursor of L-lysine and an essential component of the bacterial peptidoglycan. In Enterococcus faecalis (strain ATCC 700802 / V583), this protein is Diaminopimelate epimerase.